We begin with the raw amino-acid sequence, 190 residues long: MINIVLFGKPGAGKGTQAEFLKEKYNLTHLSTGDIFRFNLKNDTELGKQARVFMDNGELVPCEVTTAMLIDEVKKHPDSAGFLFDGYPRTLDQAEALDKFLPTIGSSVTATIALEADDEILVKRLLERGKTSGRADDQDEEKIRVRYQEYNEKTAPLIGYYKDQNKFYAVDGIGTIEQITERLTSVIDNL.

Residue 11–16 participates in ATP binding; the sequence is GAGKGT. The interval 31 to 60 is NMP; sequence STGDIFRFNLKNDTELGKQARVFMDNGELV. Residues Thr32, Arg37, 58 to 60, 86 to 89, and Gln93 each bind AMP; these read ELV and GYPR. The tract at residues 127–137 is LID; sequence ERGKTSGRADD. An ATP-binding site is contributed by Arg128. Residues Arg134 and Arg146 each coordinate AMP. Gly174 contributes to the ATP binding site.

Belongs to the adenylate kinase family. As to quaternary structure, monomer.

Its subcellular location is the cytoplasm. It catalyses the reaction AMP + ATP = 2 ADP. It functions in the pathway purine metabolism; AMP biosynthesis via salvage pathway; AMP from ADP: step 1/1. Its function is as follows. Catalyzes the reversible transfer of the terminal phosphate group between ATP and AMP. Plays an important role in cellular energy homeostasis and in adenine nucleotide metabolism. In Flavobacterium johnsoniae (strain ATCC 17061 / DSM 2064 / JCM 8514 / BCRC 14874 / CCUG 350202 / NBRC 14942 / NCIMB 11054 / UW101) (Cytophaga johnsonae), this protein is Adenylate kinase.